A 284-amino-acid polypeptide reads, in one-letter code: MKLDGYTRLAAVVANPIKHSISPFIHNRAFEATATNGAYVAWEIEASDLVETVANIRRYQMFGINLSMPYKEQVIPYLDKLSDEARLIGAVNTVVNENGNLIGYNTDGKGFFKCLPSFTISGKKMTLLGAGGAAKSILAQAILDGVSQISVFVRSVSMEKTRPYLDKLQEQTGFKVDLCALEYVSELQARIAESDLLVNATSVGMDGQSSPVPENIVLPETLLVADIIYQPFETPFLKWARSQGNPAVNGLGMLLYQAAEAFQLWTGKEMPTEEIWQSLTEKYQ.

Residues 20–22 (SIS) and serine 67 contribute to the shikimate site. Lysine 71 acts as the Proton acceptor in catalysis. Aspartate 83 contacts NADP(+). Shikimate-binding residues include asparagine 92 and aspartate 107. NADP(+) is bound by residues 129–133 (GAGGA) and isoleucine 227. Tyrosine 229 serves as a coordination point for shikimate. Glycine 250 is a binding site for NADP(+).

This sequence belongs to the shikimate dehydrogenase family. Homodimer.

It catalyses the reaction shikimate + NADP(+) = 3-dehydroshikimate + NADPH + H(+). Its pathway is metabolic intermediate biosynthesis; chorismate biosynthesis; chorismate from D-erythrose 4-phosphate and phosphoenolpyruvate: step 4/7. Functionally, involved in the biosynthesis of the chorismate, which leads to the biosynthesis of aromatic amino acids. Catalyzes the reversible NADPH linked reduction of 3-dehydroshikimate (DHSA) to yield shikimate (SA). This Streptococcus pneumoniae serotype 2 (strain D39 / NCTC 7466) protein is Shikimate dehydrogenase (NADP(+)).